Here is a 490-residue protein sequence, read N- to C-terminus: MSQSVSERTRIKSDRYESGVIPYAKMGYWDASYTVQDTDVLALFRITPQPGVDPVEAAAAVAGESSTATWTVVWTDLLTACERYRAKAYRVDPVPNTTDQYFAFIAYECDLFEEGSLANLTASIIGNVFGFKAVAALRLEDMRIPYAYLKTFQGPATGIVVERERLNKYGAPLLGATVKPKLGLSGKNYGRVVYEGLKGGLDFLKDDENINSQPFMRWRERFLYCLEGINRASAATGEVKGSYLNITAATMEEVYKRADYAKQIGSVIVIIDLVMGYTAIQSAAIWARDNDMLLHLHRAGNSTYARQKNHGINFRVICKWMRMSGVDHIHAGTVVGKLEGDPLMIKGFYDVLRLTTLDVNLPYGIFFDMSWASLRKCMPVASGGIHCGQMHQLIHYLGDDVVLQFGGGTIGHPDGIQAGATANRVALEAMVLARNEGADYFNPQVGPQILREAAKKCGPLQTALDLWKDISFNYTSTDTADFAETPTANV.

N127 and T177 together coordinate substrate. The Proton acceptor role is filled by K179. K181 contributes to the substrate binding site. Mg(2+) contacts are provided by K205, D207, and E208. K205 carries the post-translational modification N6-carboxylysine. The active-site Proton acceptor is H297. Substrate-binding residues include R298, H330, and S382.

The protein belongs to the RuBisCO large chain family. Type I subfamily. Heterohexadecamer of 8 large chains and 8 small chains. Mg(2+) serves as cofactor.

Its subcellular location is the plastid. The protein localises to the chloroplast. It carries out the reaction 2 (2R)-3-phosphoglycerate + 2 H(+) = D-ribulose 1,5-bisphosphate + CO2 + H2O. The enzyme catalyses D-ribulose 1,5-bisphosphate + O2 = 2-phosphoglycolate + (2R)-3-phosphoglycerate + 2 H(+). RuBisCO catalyzes two reactions: the carboxylation of D-ribulose 1,5-bisphosphate, the primary event in carbon dioxide fixation, as well as the oxidative fragmentation of the pentose substrate in the photorespiration process. Both reactions occur simultaneously and in competition at the same active site. The sequence is that of Ribulose bisphosphate carboxylase large chain from Trieres chinensis (Marine centric diatom).